The chain runs to 510 residues: UDP-N-acetylmuramyl-tripeptide synthetase (510 aa).

Serine 36 contributes to the UDP-N-acetyl-alpha-D-muramoyl-L-alanyl-D-glutamate binding site. 113–119 (GTKGKTT) contacts ATP. UDP-N-acetyl-alpha-D-muramoyl-L-alanyl-D-glutamate-binding positions include 159-160 (TT), serine 186, and arginine 194. Lysine 228 is modified (N6-carboxylysine).

Belongs to the MurCDEF family. MurE subfamily. Carboxylation is probably crucial for Mg(2+) binding and, consequently, for the gamma-phosphate positioning of ATP.

It is found in the cytoplasm. It participates in cell wall biogenesis; peptidoglycan biosynthesis. In terms of biological role, catalyzes the addition of an amino acid to the nucleotide precursor UDP-N-acetylmuramoyl-L-alanyl-D-glutamate (UMAG) in the biosynthesis of bacterial cell-wall peptidoglycan. The polypeptide is UDP-N-acetylmuramyl-tripeptide synthetase (Ligilactobacillus salivarius (strain UCC118) (Lactobacillus salivarius)).